The sequence spans 415 residues: Multidrug resistance protein MdtA (415 aa).

The first 21 residues, Met-1 to Ala-21, serve as a signal peptide directing secretion. A disordered region spans residues Ala-387–Ser-415. Over residues Ala-394–Pro-403 the composition is skewed to basic and acidic residues.

It belongs to the membrane fusion protein (MFP) (TC 8.A.1) family. As to quaternary structure, part of a tripartite efflux system composed of MdtA, MdtB and MdtC.

It localises to the cell inner membrane. This chain is Multidrug resistance protein MdtA, found in Cronobacter turicensis (strain DSM 18703 / CCUG 55852 / LMG 23827 / z3032).